The sequence spans 100 residues: Large ribosomal subunit protein uL23 (100 aa).

Belongs to the universal ribosomal protein uL23 family. In terms of assembly, part of the 50S ribosomal subunit. Contacts protein L29, and trigger factor when it is bound to the ribosome.

Its function is as follows. One of the early assembly proteins it binds 23S rRNA. One of the proteins that surrounds the polypeptide exit tunnel on the outside of the ribosome. Forms the main docking site for trigger factor binding to the ribosome. The sequence is that of Large ribosomal subunit protein uL23 from Prochlorococcus marinus subsp. pastoris (strain CCMP1986 / NIES-2087 / MED4).